A 69-amino-acid chain; its full sequence is MTNGKIWLVVKPTVGLPIGMLFAALLAVLIHGLLFVDGRLKSWWSEFPVAKPAVVSVQAAPAPVAAEVK.

The Cytoplasmic portion of the chain corresponds to 1 to 14; that stretch reads MTNGKIWLVVKPTV. A helical membrane pass occupies residues 15 to 35; sequence GLPIGMLFAALLAVLIHGLLF. Residue H31 coordinates a bacteriochlorophyll. Topologically, residues 36–69 are periplasmic; that stretch reads VDGRLKSWWSEFPVAKPAVVSVQAAPAPVAAEVK.

It belongs to the antenna complex alpha subunit family. As to quaternary structure, the core complex is formed by different alpha and beta chains, binding bacteriochlorophyll molecules, and arranged most probably in tetrameric structures disposed around the reaction center. The non-pigmented gamma chains may constitute additional components.

It localises to the cell inner membrane. Antenna complexes are light-harvesting systems, which transfer the excitation energy to the reaction centers. The chain is Light-harvesting polypeptide B-800/860 alpha chain from Rhodocyclus tenuis (Rhodospirillum tenue).